Reading from the N-terminus, the 240-residue chain is Uridylate kinase (240 aa).

13–16 (KLSG) contributes to the ATP binding site. The segment at 21 to 26 (GEKGFG) is involved in allosteric activation by GTP. Glycine 55 contacts UMP. Glycine 56 and arginine 60 together coordinate ATP. UMP is bound by residues aspartate 75 and 136–143 (IGNPYFST). ATP is bound by residues asparagine 164, tyrosine 170, and aspartate 173.

Belongs to the UMP kinase family. As to quaternary structure, homohexamer.

The protein resides in the cytoplasm. It catalyses the reaction UMP + ATP = UDP + ADP. Its pathway is pyrimidine metabolism; CTP biosynthesis via de novo pathway; UDP from UMP (UMPK route): step 1/1. Its activity is regulated as follows. Allosterically activated by GTP. Inhibited by UTP. Catalyzes the reversible phosphorylation of UMP to UDP. This chain is Uridylate kinase, found in Staphylococcus aureus (strain Newman).